The following is a 75-amino-acid chain: Small ribosomal subunit protein bS18c (75 aa).

Belongs to the bacterial ribosomal protein bS18 family. In terms of assembly, part of the 30S ribosomal subunit.

Its subcellular location is the plastid. The protein localises to the chloroplast. In Adiantum capillus-veneris (Maidenhair fern), this protein is Small ribosomal subunit protein bS18c.